Consider the following 335-residue polypeptide: Probable E3 ubiquitin-protein ligase BAH1-like (335 aa).

The SPX domain occupies 1–163 (MKFGETFTEY…SSENGKNFKL (163 aa)). The RING-type zinc finger occupies 231-280 (CAICLETVFNPYALKCGHIFCNSCACSAASVLIFQGIKAAPRHSKCPICR).

Belongs to the RING-type zinc finger family.

It catalyses the reaction S-ubiquitinyl-[E2 ubiquitin-conjugating enzyme]-L-cysteine + [acceptor protein]-L-lysine = [E2 ubiquitin-conjugating enzyme]-L-cysteine + N(6)-ubiquitinyl-[acceptor protein]-L-lysine.. It participates in protein modification; protein ubiquitination. The chain is Probable E3 ubiquitin-protein ligase BAH1-like (RF178) from Arabidopsis thaliana (Mouse-ear cress).